Here is a 249-residue protein sequence, read N- to C-terminus: Vacuolar iron transporter homolog 3 (249 aa).

A disordered region spans residues M1–G32. Residues M1 to A74 lie on the Cytoplasmic side of the membrane. Residues S16–E26 are compositionally biased toward pro residues. Residues V75 to V95 traverse the membrane as a helical segment. Topologically, residues S96–M102 are vacuolar. The helical transmembrane segment at L103 to V123 threads the bilayer. Topologically, residues S124 to A166 are cytoplasmic. Residues A167–V187 form a helical membrane-spanning segment. Residues R188–R193 are Vacuolar-facing. The helical transmembrane segment at V194 to A214 threads the bilayer. Residues L215 to R226 are Cytoplasmic-facing. The chain crosses the membrane as a helical span at residues V227 to N247. Residues L248–Y249 lie on the Vacuolar side of the membrane.

Belongs to the CCC1 family.

Its subcellular location is the vacuole membrane. The enzyme catalyses Fe(2+)(in) = Fe(2+)(out). Functionally, probable vacuolar iron transporter that may be involved in the regulation of iron distribution throughout the plant. The sequence is that of Vacuolar iron transporter homolog 3 from Oryza sativa subsp. japonica (Rice).